We begin with the raw amino-acid sequence, 1048 residues long: Transcription factor mef2A (1048 aa).

Residues 1 to 61 (MGRNKITIEK…NKLFQYSSRD (61 aa)) form the MADS-box domain. The span at 74-85 (DNTRKNLTNQDY) shows a compositional bias: polar residues. 4 disordered regions span residues 74–263 (DNTR…QAAQ), 294–339 (QQQH…QQQQ), 386–812 (GIYG…NINT), and 916–1048 (LLLT…EPKN). Positions 97 to 110 (DDEDGDDDGDEDLG) are enriched in acidic residues. Low complexity-rich tracts occupy residues 130-205 (NNNN…NANH), 212-263 (GNSA…QAAQ), 294-303 (QQQHQQQQQN), 327-339 (QQQQQMQHSQQQQ), 393-437 (PPQM…IMNK), 446-466 (YYDYNGYPQQQQPPQNYNSNG), and 481-500 (QQQSANPYIQQQQQPQHQSP). Residues 249–304 (NNNSNGYQQQQQAAQQAVQQAQMAQQMHLQQQQQYQQLQHIQQQQQQQHQQQQQNM) are a coiled coil. Positions 506-522 (YSPQQQSPVLNSQNGHH) are enriched in polar residues. Residues 529–539 (HQMHHQQHQHQ) show a composition bias toward basic residues. Residues 540-593 (QHPQMQQQQQQQQQHQQHPQMQQIQQQQHPQMQQHQQHQQQHPQMQQQHMNNHQ) show a composition bias toward low complexity. Polar residues predominate over residues 600–618 (NSSPEINSQKNVHSSPLIM). A compositionally biased stretch (low complexity) spans 619-699 (NSNNNNNNNN…NSNNGNNNNN (81 aa)). Residues 715-736 (SSPTIPEQPSINVSTSSNSAHV) are compositionally biased toward polar residues. 3 stretches are compositionally biased toward low complexity: residues 738 to 802 (NNIT…SSST), 924 to 960 (SNNSNSSNNNNNNNNNNNNTNNNNISGNGSSSSSSSS), and 982 to 1029 (NNNN…NNSN).

The protein resides in the nucleus. Its function is as follows. Transcription factor that regulates cell differentiation during development. Seems to negatively regulate prestalk gene expression and positively regulate prespore gene expression. The protein is Transcription factor mef2A (mef2A) of Dictyostelium discoideum (Social amoeba).